A 344-amino-acid polypeptide reads, in one-letter code: Mitochondrial mRNA pseudouridine synthase RPUSD3 (344 aa).

The N-terminal 41 residues, 1-41 (MGGWRVLGQASGGWRRGLGIRATSTAAGFGTKARHQLQRRG), are a transit peptide targeting the mitochondrion. Residues 29–59 (FGTKARHQLQRRGASKPSDPPGDQPFPGLLR) form a disordered region. A compositionally biased stretch (basic residues) spans 32 to 42 (KARHQLQRRGA). Residue serine 64 is modified to Phosphoserine.

The protein belongs to the pseudouridine synthase RluA family. Forms a regulatory protein-RNA complex, consisting of RCC1L, NGRN, RPUSD3, RPUSD4, TRUB2, FASTKD2 and 16S mt-rRNA.

The protein localises to the mitochondrion matrix. The enzyme catalyses a uridine in mRNA = a pseudouridine in mRNA. In terms of biological role, catalyzes uridine to pseudouridine isomerization (pseudouridylation) of specific mitochondrial mRNAs (mt-mRNAs), a post-transcriptional modification necessary for their translation. Acts at position 390 in COXI mt-mRNA and at position 697-699 in mitochondrial COXIII mt-mRNA. As a component of a functional protein-RNA module, consisting of RCC1L, NGRN, RPUSD3, RPUSD4, TRUB2, FASTKD2 and 16S mitochondrial ribosomal RNA (16S mt-rRNA), controls 16S mt-rRNA abundance and may play a role in mitochondrial ribosome biogenesis. This is Mitochondrial mRNA pseudouridine synthase RPUSD3 (RPUSD3) from Bos taurus (Bovine).